The chain runs to 145 residues: Photosystem I reaction center subunit VI-2, chloroplastic (145 aa).

The N-terminal 50 residues, 1–50 (MASFATIAAVQPSAAVKGLGGSSLAGAKLFIKPSRQSFKTKSTRAGAVVA), are a transit peptide targeting the chloroplast. Residues 102–118 (LLLKFLILGGGSLLTYV) traverse the membrane as a helical segment. Residues 126 to 145 (VLPIKRGPQEPPKLGPRGKL) form a disordered region.

This sequence belongs to the psaH family.

The protein localises to the plastid. It localises to the chloroplast thylakoid membrane. In terms of biological role, possible role could be the docking of the LHC I antenna complex to the core complex. This Arabidopsis thaliana (Mouse-ear cress) protein is Photosystem I reaction center subunit VI-2, chloroplastic (PSAH2).